Consider the following 117-residue polypeptide: Large ribosomal subunit protein bL17 (117 aa).

The protein belongs to the bacterial ribosomal protein bL17 family. As to quaternary structure, part of the 50S ribosomal subunit. Contacts protein L32.

In Neorickettsia sennetsu (strain ATCC VR-367 / Miyayama) (Ehrlichia sennetsu), this protein is Large ribosomal subunit protein bL17.